The primary structure comprises 338 residues: MTTTLVSATIFDLSEVLCKGNKMLNYSAPSAGGCLLDRKAVGTPAGGGFPRRHSVTLPSSKFHQNQLLSSLKGEPAPALSSRDSRFRDRSFSEGGERLLPTQKQPGGGQVNSSRYKTELCRPFEENGACKYGDKCQFAHGIHELRSLTRHPKYKTELCRTFHTIGFCPYGPRCHFIHNAEERRALAGARDLSADRPRLQHSFSFAGFPSAAATAAATGLLDSPTSITPPPILSADDLLGSPTLPDGTNNPFAFSSQELASLFAPSMGLPGGGSPTTFLFRPMSESPHMFDSPPSPQDSLSDQEGYLSSSSSSHSGSDSPTLDNSRRLPIFSRLSISDD.

Residues 1–111 (MTTTLVSATI…QKQPGGGQVN (111 aa)) form a necessary and sufficient for the association with mRNA decay enzymes and mRNA decay activation region. Residue Ser-54 is modified to Phosphoserine; by MAPKAPK2. Ser-90 carries the phosphoserine; by PKB/AKT1 modification. Ser-92 is subject to Phosphoserine; by PKB/AKT1 and MAPKAPK2. Positions 93-113 (EGGERLLPTQKQPGGGQVNSS) are disordered. 2 C3H1-type zinc fingers span residues 114–142 (RYKT…HGIH) and 152–180 (KYKT…HNAE). The interval 185–338 (LAGARDLSAD…IFSRLSISDD (154 aa)) is necessary for mRNA decay activation. Ser-203 bears the Phosphoserine; by PKB/AKT1 and MAPKAPK2 mark. A disordered region spans residues 273 to 338 (SPTTFLFRPM…IFSRLSISDD (66 aa)). The segment covering 296–318 (QDSLSDQEGYLSSSSSSHSGSDS) has biased composition (low complexity). Phosphoserine is present on Ser-318. At Ser-334 the chain carries Phosphoserine; by RPS6KA1.

Associates with the cytoplasmic CCR4-NOT deadenylase and RNA exosome complexes to trigger ARE-containing mRNA deadenylation and decay processes. Interacts with CNOT1. Interacts (via N-terminus) with CNOT6. Interacts with CNOT7; this interaction is inhibited in response to phorbol 12-myristate 13-acetate (PMA) treatment in a p38 MAPK-dependent manner. Interacts with DCP1A. Interacts (via N-terminus) with DCP2. Interacts (via N-terminus) with EXOSC2. Interacts with XRN1. Interacts (via phosphorylated form) with YWHAB; this interaction occurs in a protein kinase AKT1-dependent manner. Interacts (via phosphorylated form) with YWHAZ; this interaction occurs in a p38 MAPK- and AKT-signaling pathways. Phosphorylated. Phosphorylated by RPS6KA1 at Ser-334 upon phorbol 12-myristate 13-acetate (PMA) treatment; this phosphorylation results in dissociation of the CCR4-NOT deadenylase complex and induces p38 MAPK-mediated stabilization of the low-density lipoprotein receptor LDLR mRNA. Phosphorylated by protein kinase AKT1 at Ser-92 and Ser-203 in response to insulin; these phosphorylations stabilize ZFP36L1, increase the association with 14-3-3 proteins and mediate ARE-containing mRNA stabilization. AKT1-mediated phosphorylation at Ser-92 does not impair ARE-containing RNA-binding. Phosphorylated at Ser-54, Ser-92 and Ser-203 by MAPKAPK2; these phosphorylations increase the association with 14-3-3 proteins and mediate ARE-containing mRNA stabilization in a protein kinase AKT1-independent manner. MAPKAPK2-mediated phosphorylations at Ser-54, Ser-92 and Ser-203 do not impair ARE-containing RNA-binding. Phosphorylations increase the association with 14-3-3 proteins and mediate ARE-containing mRNA stabilization during early adipogenesis in a p38 MAPK- and AKT-dependent manner. In terms of processing, ubiquitinated. Ubiquitination leads to proteasomal degradation, a process inhibited by phosphorylations at Ser-90, Ser-92 and Ser-203. In terms of tissue distribution, expressed mainly in the basal epidermal layer, weakly in the suprabasal epidermal layers. Expressed in epidermal keratinocytes (at protein level). Expressed in osteoblasts.

The protein localises to the nucleus. It is found in the cytoplasm. It localises to the cytoplasmic granule. The protein resides in the P-body. In terms of biological role, zinc-finger RNA-binding protein that destabilizes several cytoplasmic AU-rich element (ARE)-containing mRNA transcripts by promoting their poly(A) tail removal or deadenylation, and hence provide a mechanism for attenuating protein synthesis. Acts as a 3'-untranslated region (UTR) ARE mRNA-binding adapter protein to communicate signaling events to the mRNA decay machinery. Functions by recruiting the CCR4-NOT deadenylase complex and components of the cytoplasmic RNA decay machinery to the bound ARE-containing mRNAs, and hence promotes ARE-mediated mRNA deadenylation and decay processes. Also induces the degradation of ARE-containing mRNAs even in absence of poly(A) tail. Binds to 3'-UTR ARE of numerous mRNAs. Positively regulates early adipogenesis by promoting ARE-mediated mRNA decay of immediate early genes (IEGs). Promotes ARE-mediated mRNA decay of mineralocorticoid receptor NR3C2 mRNA in response to hypertonic stress. Negatively regulates hematopoietic/erythroid cell differentiation by promoting ARE-mediated mRNA decay of the transcription factor STAT5B mRNA. Positively regulates monocyte/macrophage cell differentiation by promoting ARE-mediated mRNA decay of the cyclin-dependent kinase CDK6 mRNA. Promotes degradation of ARE-containing pluripotency-associated mRNAs in embryonic stem cells (ESCs), such as NANOG, through a fibroblast growth factor (FGF)-induced MAPK-dependent signaling pathway, and hence attenuates ESC self-renewal and positively regulates mesendoderm differentiation. May play a role in mediating pro-apoptotic effects in malignant B-cells by promoting ARE-mediated mRNA decay of BCL2 mRNA. In association with ZFP36L2 maintains quiescence on developing B lymphocytes by promoting ARE-mediated decay of several mRNAs encoding cell cycle regulators that help B cells progress through the cell cycle, and hence ensuring accurate variable-diversity-joining (VDJ) recombination and functional immune cell formation. Together with ZFP36L2 is also necessary for thymocyte development and prevention of T-cell acute lymphoblastic leukemia (T-ALL) transformation by promoting ARE-mediated mRNA decay of the oncogenic transcription factor NOTCH1 mRNA. Participates in the delivery of target ARE-mRNAs to processing bodies (PBs). In addition to its cytosolic mRNA-decay function, plays a role in the regulation of nuclear mRNA 3'-end processing; modulates mRNA 3'-end maturation efficiency of the DLL4 mRNA through binding with an ARE embedded in a weak noncanonical polyadenylation (poly(A)) signal in endothelial cells. Also involved in the regulation of stress granule (SG) and P-body (PB) formation and fusion. Plays a role in vasculogenesis and endocardial development. Plays a role in the regulation of keratinocyte proliferation, differentiation and apoptosis. Plays a role in myoblast cell differentiation. This Homo sapiens (Human) protein is mRNA decay activator protein ZFP36L1.